Reading from the N-terminus, the 328-residue chain is Tetraacyldisaccharide 4'-kinase (328 aa).

55–62 (TAGGNGKT) contributes to the ATP binding site.

Belongs to the LpxK family.

It catalyses the reaction a lipid A disaccharide + ATP = a lipid IVA + ADP + H(+). It functions in the pathway glycolipid biosynthesis; lipid IV(A) biosynthesis; lipid IV(A) from (3R)-3-hydroxytetradecanoyl-[acyl-carrier-protein] and UDP-N-acetyl-alpha-D-glucosamine: step 6/6. In terms of biological role, transfers the gamma-phosphate of ATP to the 4'-position of a tetraacyldisaccharide 1-phosphate intermediate (termed DS-1-P) to form tetraacyldisaccharide 1,4'-bis-phosphate (lipid IVA). This chain is Tetraacyldisaccharide 4'-kinase, found in Escherichia coli O139:H28 (strain E24377A / ETEC).